Consider the following 433-residue polypeptide: D-amino acid dehydrogenase (433 aa).

3-17 (VLVLGSGVIGTTSAY) is an FAD binding site.

This sequence belongs to the DadA oxidoreductase family. FAD is required as a cofactor.

It catalyses the reaction a D-alpha-amino acid + A + H2O = a 2-oxocarboxylate + AH2 + NH4(+). The protein operates within amino-acid degradation; D-alanine degradation; NH(3) and pyruvate from D-alanine: step 1/1. Functionally, oxidative deamination of D-amino acids. The sequence is that of D-amino acid dehydrogenase from Pseudomonas syringae pv. syringae (strain B728a).